The primary structure comprises 352 residues: V-type ATP synthase subunit C (352 aa).

This sequence belongs to the V-ATPase V0D/AC39 subunit family.

Its function is as follows. Produces ATP from ADP in the presence of a proton gradient across the membrane. This chain is V-type ATP synthase subunit C (atpC), found in Deinococcus radiodurans (strain ATCC 13939 / DSM 20539 / JCM 16871 / CCUG 27074 / LMG 4051 / NBRC 15346 / NCIMB 9279 / VKM B-1422 / R1).